We begin with the raw amino-acid sequence, 153 residues long: Pheromone-binding protein Gp-9 (153 aa).

The signal sequence occupies residues 1–19 (MKTLILHICIFALVAFASA). 3 cysteine pairs are disulfide-bonded: Cys37-Cys77, Cys73-Cys129, and Cys118-Cys138.

It belongs to the PBP/GOBP family. Homodimer.

The protein resides in the secreted. Its function is as follows. Colony queen number, a major feature of social organization, is associated with worker genotype for Gp-9. Colonies are headed by either a single reproductive queen (monogyne form) or multiple queens (polygyne form). Differences in worker Gp-9 genotypes between social forms may cause differences in workers' abilities to recognize queens and regulate their numbers. The protein is Pheromone-binding protein Gp-9 of Solenopsis nigella gensterblumi (Fire ant).